The primary structure comprises 270 residues: Putative phosphoenolpyruvate synthase regulatory protein (270 aa).

150–157 (GVSRCGKT) provides a ligand contact to ADP.

The protein belongs to the pyruvate, phosphate/water dikinase regulatory protein family. PSRP subfamily.

The catalysed reaction is [pyruvate, water dikinase] + ADP = [pyruvate, water dikinase]-phosphate + AMP + H(+). The enzyme catalyses [pyruvate, water dikinase]-phosphate + phosphate + H(+) = [pyruvate, water dikinase] + diphosphate. In terms of biological role, bifunctional serine/threonine kinase and phosphorylase involved in the regulation of the phosphoenolpyruvate synthase (PEPS) by catalyzing its phosphorylation/dephosphorylation. The protein is Putative phosphoenolpyruvate synthase regulatory protein of Aeromonas hydrophila subsp. hydrophila (strain ATCC 7966 / DSM 30187 / BCRC 13018 / CCUG 14551 / JCM 1027 / KCTC 2358 / NCIMB 9240 / NCTC 8049).